The following is a 305-amino-acid chain: Cytochrome c biogenesis protein CcsA (305 aa).

Transmembrane regions (helical) follow at residues valine 4–tryptophan 24, serine 32–leucine 52, glycine 58–leucine 78, isoleucine 91–leucine 111, valine 136–valine 156, threonine 212–asparagine 232, threonine 246–leucine 263, and valine 275–isoleucine 295.

Belongs to the CcmF/CycK/Ccl1/NrfE/CcsA family. In terms of assembly, may interact with ccs1.

The protein localises to the cellular thylakoid membrane. Its function is as follows. Required during biogenesis of c-type cytochromes (cytochrome c6 and cytochrome f) at the step of heme attachment. The sequence is that of Cytochrome c biogenesis protein CcsA from Synechococcus sp. (strain CC9311).